The chain runs to 178 residues: ATP synthase subunit delta (178 aa).

Belongs to the ATPase delta chain family. In terms of assembly, F-type ATPases have 2 components, F(1) - the catalytic core - and F(0) - the membrane proton channel. F(1) has five subunits: alpha(3), beta(3), gamma(1), delta(1), epsilon(1). F(0) has three main subunits: a(1), b(2) and c(10-14). The alpha and beta chains form an alternating ring which encloses part of the gamma chain. F(1) is attached to F(0) by a central stalk formed by the gamma and epsilon chains, while a peripheral stalk is formed by the delta and b chains.

The protein resides in the cell membrane. F(1)F(0) ATP synthase produces ATP from ADP in the presence of a proton or sodium gradient. F-type ATPases consist of two structural domains, F(1) containing the extramembraneous catalytic core and F(0) containing the membrane proton channel, linked together by a central stalk and a peripheral stalk. During catalysis, ATP synthesis in the catalytic domain of F(1) is coupled via a rotary mechanism of the central stalk subunits to proton translocation. In terms of biological role, this protein is part of the stalk that links CF(0) to CF(1). It either transmits conformational changes from CF(0) to CF(1) or is implicated in proton conduction. In Streptococcus agalactiae serotype V (strain ATCC BAA-611 / 2603 V/R), this protein is ATP synthase subunit delta.